The primary structure comprises 701 residues: Elongation factor G (701 aa).

Residues 11–287 (TKVRNIGIMA…AVIDYLPSPL (277 aa)) enclose the tr-type G domain. GTP-binding positions include 20 to 27 (AHIDAGKT), 84 to 88 (DTPGH), and 138 to 141 (NKMD).

It belongs to the TRAFAC class translation factor GTPase superfamily. Classic translation factor GTPase family. EF-G/EF-2 subfamily.

The protein resides in the cytoplasm. Functionally, catalyzes the GTP-dependent ribosomal translocation step during translation elongation. During this step, the ribosome changes from the pre-translocational (PRE) to the post-translocational (POST) state as the newly formed A-site-bound peptidyl-tRNA and P-site-bound deacylated tRNA move to the P and E sites, respectively. Catalyzes the coordinated movement of the two tRNA molecules, the mRNA and conformational changes in the ribosome. The protein is Elongation factor G of Mycobacterium marinum (strain ATCC BAA-535 / M).